A 176-amino-acid chain; its full sequence is ATP synthase subunit delta (176 aa).

The protein belongs to the ATPase delta chain family. F-type ATPases have 2 components, F(1) - the catalytic core - and F(0) - the membrane proton channel. F(1) has five subunits: alpha(3), beta(3), gamma(1), delta(1), epsilon(1). F(0) has three main subunits: a(1), b(2) and c(10-14). The alpha and beta chains form an alternating ring which encloses part of the gamma chain. F(1) is attached to F(0) by a central stalk formed by the gamma and epsilon chains, while a peripheral stalk is formed by the delta and b chains.

Its subcellular location is the cell inner membrane. Its function is as follows. F(1)F(0) ATP synthase produces ATP from ADP in the presence of a proton or sodium gradient. F-type ATPases consist of two structural domains, F(1) containing the extramembraneous catalytic core and F(0) containing the membrane proton channel, linked together by a central stalk and a peripheral stalk. During catalysis, ATP synthesis in the catalytic domain of F(1) is coupled via a rotary mechanism of the central stalk subunits to proton translocation. In terms of biological role, this protein is part of the stalk that links CF(0) to CF(1). It either transmits conformational changes from CF(0) to CF(1) or is implicated in proton conduction. This Campylobacter hominis (strain ATCC BAA-381 / DSM 21671 / CCUG 45161 / LMG 19568 / NCTC 13146 / CH001A) protein is ATP synthase subunit delta.